The primary structure comprises 147 residues: UPF0251 protein NT01CX_1491 (147 aa).

Belongs to the UPF0251 family.

The polypeptide is UPF0251 protein NT01CX_1491 (Clostridium novyi (strain NT)).